A 667-amino-acid chain; its full sequence is Protein MAIN-LIKE 2 (667 aa).

Methionine 1 carries the post-translational modification N-acetylmethionine. Residues 492-508 (MRGKERVRRKGMGKRRK) show a composition bias toward basic residues. Disordered regions lie at residues 492–523 (MRGK…EDES) and 594–667 (KLQE…TVVA). Over residues 512–523 (PMEDYGGSEDES) the composition is skewed to acidic residues. Basic and acidic residues-rich tracts occupy residues 608–618 (YDVKKEDKESK) and 656–667 (SLDRRGENTVVA).

Expressed in root tips, the shoot apical meristem (SAM), leaves, mature flowers and embryos.

The protein resides in the nucleus. Maybe required to maintain cell division activity in meristematic cells. The polypeptide is Protein MAIN-LIKE 2 (Arabidopsis thaliana (Mouse-ear cress)).